The primary structure comprises 143 residues: MAKKIIGFIKLQIPAGKANPSPPVGPALGQRGLNIMEFCKAFNAQTQGMEPGLPVPVVITAFADKSFTFVMKSPPATVLIKKAAGVTKGSPKPHTDKVGKITRAQAEEIAKAKNADLTAADLDAAVRTIAGSARSMGITVEGL.

The protein belongs to the universal ribosomal protein uL11 family. Part of the ribosomal stalk of the 50S ribosomal subunit. Interacts with L10 and the large rRNA to form the base of the stalk. L10 forms an elongated spine to which L12 dimers bind in a sequential fashion forming a multimeric L10(L12)X complex. Post-translationally, one or more lysine residues are methylated.

Forms part of the ribosomal stalk which helps the ribosome interact with GTP-bound translation factors. This is Large ribosomal subunit protein uL11 from Cupriavidus pinatubonensis (strain JMP 134 / LMG 1197) (Cupriavidus necator (strain JMP 134)).